The primary structure comprises 351 residues: 3-dehydroquinate synthase (351 aa).

NAD(+) is bound by residues 60–65 (DGEEYK), 94–98 (GVISD), 118–119 (TT), lysine 131, lysine 140, and 158–161 (FLKT). Glutamate 173, histidine 239, and histidine 256 together coordinate Zn(2+).

Belongs to the sugar phosphate cyclases superfamily. Dehydroquinate synthase family. The cofactor is NAD(+). Co(2+) is required as a cofactor. It depends on Zn(2+) as a cofactor.

It is found in the cytoplasm. The enzyme catalyses 7-phospho-2-dehydro-3-deoxy-D-arabino-heptonate = 3-dehydroquinate + phosphate. It participates in metabolic intermediate biosynthesis; chorismate biosynthesis; chorismate from D-erythrose 4-phosphate and phosphoenolpyruvate: step 2/7. Functionally, catalyzes the conversion of 3-deoxy-D-arabino-heptulosonate 7-phosphate (DAHP) to dehydroquinate (DHQ). The polypeptide is 3-dehydroquinate synthase (Campylobacter jejuni subsp. jejuni serotype O:2 (strain ATCC 700819 / NCTC 11168)).